Consider the following 64-residue polypeptide: Large ribosomal subunit protein uL30 (64 aa).

The disordered stretch occupies residues 1–22; it reads MSEQVKRVRVTQVGSPIGRKPG.

Belongs to the universal ribosomal protein uL30 family. In terms of assembly, part of the 50S ribosomal subunit.

In Acidiphilium cryptum (strain JF-5), this protein is Large ribosomal subunit protein uL30.